The following is a 421-amino-acid chain: UDP-glucuronic acid decarboxylase 1 (421 aa).

Over 1–19 (MVRTRIQRLLTGINRRMMK) the chain is Cytoplasmic. Residues 20–40 (LLIALALIAYVASVWGNFVNM) form a helical membrane-spanning segment. Topologically, residues 41-421 (SKSIQENGEQ…RVKKGRTRHN (381 aa)) are lumenal. 10 residues coordinate NAD(+): G99, F100, V101, D120, N121, F123, T124, G125, D145, and V146. Residues L150 and Y151 each coordinate UDP-alpha-D-glucuronate. Positions 160 and 162 each coordinate NAD(+). Position 178 (K178) interacts with UDP-alpha-D-glucuronate. T179 is a binding site for NAD(+). Residues N186, G189, K192, and R193 each contribute to the UDP-alpha-D-glucuronate site. Residues A201, Y232, and K236 each coordinate NAD(+). Residue Y232 is the Proton acceptor of the active site. Residues Y246, Q249, and E250 each contribute to the UDP-alpha-D-glucuronate site. T262, H268, and R273 together coordinate NAD(+). 2 N-linked (GlcNAc...) asparagine glycosylation sites follow: N317 and N386. The tract at residues 400–421 (ANNQYIPKPKPARVKKGRTRHN) is disordered. The segment covering 409–421 (KPARVKKGRTRHN) has biased composition (basic residues).

This sequence belongs to the NAD(P)-dependent epimerase/dehydratase family. UDP-glucuronic acid decarboxylase subfamily. Homodimer and homotetramer. NAD(+) serves as cofactor.

The protein resides in the golgi apparatus. It is found in the golgi stack membrane. It carries out the reaction UDP-alpha-D-glucuronate + H(+) = UDP-alpha-D-xylose + CO2. It participates in nucleotide-sugar biosynthesis; UDP-alpha-D-xylose biosynthesis; UDP-alpha-D-xylose from UDP-alpha-D-glucuronate: step 1/1. Catalyzes the NAD-dependent decarboxylation of UDP-glucuronic acid to UDP-xylose. Necessary for the biosynthesis of the core tetrasaccharide in glycosaminoglycan biosynthesis. The chain is UDP-glucuronic acid decarboxylase 1 (uxs1) from Xenopus tropicalis (Western clawed frog).